The chain runs to 258 residues: NH(3)-dependent NAD(+) synthetase (258 aa).

34–41 (GLSGGIDS) lines the ATP pocket. Asp40 contacts Mg(2+). Arg116 serves as a coordination point for deamido-NAD(+). Thr136 contacts ATP. Residue Glu141 participates in Mg(2+) binding. The ATP site is built by Lys165 and Ser187.

Belongs to the NAD synthetase family. In terms of assembly, homodimer.

The enzyme catalyses deamido-NAD(+) + NH4(+) + ATP = AMP + diphosphate + NAD(+) + H(+). The protein operates within cofactor biosynthesis; NAD(+) biosynthesis; NAD(+) from deamido-NAD(+) (ammonia route): step 1/1. Catalyzes the ATP-dependent amidation of deamido-NAD to form NAD. Uses ammonia as a nitrogen source. This chain is NH(3)-dependent NAD(+) synthetase, found in Fusobacterium nucleatum subsp. nucleatum (strain ATCC 25586 / DSM 15643 / BCRC 10681 / CIP 101130 / JCM 8532 / KCTC 2640 / LMG 13131 / VPI 4355).